A 344-amino-acid polypeptide reads, in one-letter code: Uroporphyrinogen decarboxylase (344 aa).

Substrate-binding positions include 23–27 (RQAGR), Asp73, Tyr149, Thr204, and His321.

This sequence belongs to the uroporphyrinogen decarboxylase family. Homodimer.

It is found in the cytoplasm. It carries out the reaction uroporphyrinogen III + 4 H(+) = coproporphyrinogen III + 4 CO2. It functions in the pathway porphyrin-containing compound metabolism; protoporphyrin-IX biosynthesis; coproporphyrinogen-III from 5-aminolevulinate: step 4/4. Functionally, catalyzes the decarboxylation of four acetate groups of uroporphyrinogen-III to yield coproporphyrinogen-III. The protein is Uroporphyrinogen decarboxylase of Francisella tularensis subsp. novicida (strain U112).